The chain runs to 579 residues: Probable cytochrome c oxidase subunit 1-alpha (579 aa).

The disordered stretch occupies residues 1-21 (MSILNEPQGAAAAEDSYENEL). The helical transmembrane segment at 44–64 (IGTLYLVTSFAFFCIGGVMAL) threads the bilayer. Residue His-90 coordinates Fe(II)-heme a. A run of 6 helical transmembrane segments spans residues 93–113 (IMLL…IMPL), 125–145 (LNMF…GGFL), 174–194 (MWIM…VNFI), 217–237 (VLLT…ALFA), 262–282 (LFWF…FGII), and 295–315 (FGYM…VTVW). The Cu cation site is built by His-268 and Tyr-272. A cross-link (1'-histidyl-3'-tyrosine (His-Tyr)) is located at residues 268–272 (HPEVY). Cu cation contacts are provided by His-317 and His-318. 5 consecutive transmembrane segments (helical) span residues 319–339 (MYVT…LIAV), 363–383 (MLWA…GVIL), 397–417 (FVVA…MFSG), 437–457 (ITFW…HWLG), and 480–500 (ISTI…YNVW). His-401 contacts heme a3. His-403 contributes to the Fe(II)-heme a binding site.

Belongs to the heme-copper respiratory oxidase family. In terms of assembly, associates with subunits II, III and IV to form cytochrome c oxidase. Cu(2+) serves as cofactor. Requires heme as cofactor.

The protein resides in the cell membrane. The enzyme catalyses 4 Fe(II)-[cytochrome c] + O2 + 8 H(+)(in) = 4 Fe(III)-[cytochrome c] + 2 H2O + 4 H(+)(out). It functions in the pathway energy metabolism; oxidative phosphorylation. Its function is as follows. Cytochrome c oxidase is the component of the respiratory chain that catalyzes the reduction of oxygen to water. Subunits 1-3 form the functional core of the enzyme complex. CO I is the catalytic subunit of the enzyme. Electrons originating in cytochrome c are transferred via the copper A center of subunit 2 and heme A of subunit 1 to the bimetallic center formed by heme A3 and copper B. The polypeptide is Probable cytochrome c oxidase subunit 1-alpha (ctaD1) (Streptomyces avermitilis (strain ATCC 31267 / DSM 46492 / JCM 5070 / NBRC 14893 / NCIMB 12804 / NRRL 8165 / MA-4680)).